Reading from the N-terminus, the 105-residue chain is UPF0145 protein CPS_2458 (105 aa).

It belongs to the UPF0145 family.

The polypeptide is UPF0145 protein CPS_2458 (Colwellia psychrerythraea (strain 34H / ATCC BAA-681) (Vibrio psychroerythus)).